The sequence spans 349 residues: Peroxisomal acyl-coenzyme A thioester hydrolase 1 (349 aa).

Catalysis depends on charge relay system residues Asp259, Ser282, and Gln333. Positions Ala347–Phe349 match the Microbody targeting signal motif.

This sequence belongs to the C/M/P thioester hydrolase family.

Its subcellular location is the peroxisome. The catalysed reaction is hexadecanoyl-CoA + H2O = hexadecanoate + CoA + H(+). In terms of biological role, acyl-coenzyme A (acyl-CoA) thioesterases are a group of enzymes that catalyze the hydrolysis of acyl-CoAs to the free fatty acid and coenzyme A (CoASH), providing the potential to regulate intracellular levels of acyl-CoAs, free fatty acids and CoASH. Contributes to growth on fatty acids. The chain is Peroxisomal acyl-coenzyme A thioester hydrolase 1 (TES1) from Saccharomyces cerevisiae (strain ATCC 204508 / S288c) (Baker's yeast).